The following is a 509-amino-acid chain: Scavenger receptor class B member 1 (509 aa).

Over 1 to 11 (MGGSARARWVA) the chain is Cytoplasmic. A helical transmembrane segment spans residues 12–32 (VGLGVVGLLCAVLGVVMILVM). Over 33–440 (PSLIKQQVLK…YTQLVLMPQV (408 aa)) the chain is Extracellular. N-linked (GlcNAc...) asparagine glycosylation is found at asparagine 102, asparagine 108, asparagine 173, asparagine 212, asparagine 227, asparagine 255, asparagine 310, asparagine 330, and asparagine 383. Cysteines 251 and 384 form a disulfide. A helical transmembrane segment spans residues 441 to 461 (LQYVQYVLLGLGGLLLLVPVI). Topologically, residues 462 to 509 (YQLRSQEKCFLFWSGSKKGSQDKEAIQAYSESLMSPAAKGTVLQEAKL) are cytoplasmic.

The protein belongs to the CD36 family. Post-translationally, N-glycosylated. In terms of processing, the six cysteines of the extracellular domain are all involved in intramolecular disulfide bonds.

The protein localises to the cell membrane. It localises to the membrane. Its subcellular location is the caveola. In terms of biological role, receptor for different ligands such as phospholipids, cholesterol ester, lipoproteins, phosphatidylserine and apoptotic cells. Receptor for HDL, mediating selective uptake of cholesteryl ether and HDL-dependent cholesterol efflux. Also facilitates the flux of free and esterified cholesterol between the cell surface and apoB-containing lipoproteins and modified lipoproteins, although less efficiently than HDL. May be involved in the phagocytosis of apoptotic cells, via its phosphatidylserine binding activity. In Cricetulus griseus (Chinese hamster), this protein is Scavenger receptor class B member 1 (SCARB1).